Here is a 238-residue protein sequence, read N- to C-terminus: Ribosomal RNA small subunit methyltransferase G (238 aa).

Residues G77, F82, 128-129 (AE), and R147 each bind S-adenosyl-L-methionine. Positions 216–238 (RKERSTPKKYPRKPGTPNKQPLS) are disordered.

It belongs to the methyltransferase superfamily. RNA methyltransferase RsmG family.

It is found in the cytoplasm. In terms of biological role, specifically methylates the N7 position of guanine in position 535 of 16S rRNA. The polypeptide is Ribosomal RNA small subunit methyltransferase G (Halalkalibacterium halodurans (strain ATCC BAA-125 / DSM 18197 / FERM 7344 / JCM 9153 / C-125) (Bacillus halodurans)).